A 216-amino-acid chain; its full sequence is Large ribosomal subunit protein bL25 (216 aa).

2 disordered regions span residues 1-21 (MAETQTLKAEAREKGSKGAVR) and 192-216 (SADNEAKTEEAGEDKSEEKSSGKED). A compositionally biased stretch (basic and acidic residues) spans 195-216 (NEAKTEEAGEDKSEEKSSGKED).

It belongs to the bacterial ribosomal protein bL25 family. CTC subfamily. In terms of assembly, part of the 50S ribosomal subunit; part of the 5S rRNA/L5/L18/L25 subcomplex. Contacts the 5S rRNA. Binds to the 5S rRNA independently of L5 and L18.

Its function is as follows. This is one of the proteins that binds to the 5S RNA in the ribosome where it forms part of the central protuberance. In Parvibaculum lavamentivorans (strain DS-1 / DSM 13023 / NCIMB 13966), this protein is Large ribosomal subunit protein bL25.